We begin with the raw amino-acid sequence, 93 residues long: Small ribosomal subunit protein uS19 (93 aa).

The protein belongs to the universal ribosomal protein uS19 family.

Functionally, protein S19 forms a complex with S13 that binds strongly to the 16S ribosomal RNA. This Nocardia farcinica (strain IFM 10152) protein is Small ribosomal subunit protein uS19.